A 943-amino-acid polypeptide reads, in one-letter code: Receptor-like kinase TMK3 (943 aa).

Residues 1-24 (MSNSHLGTLCFIISLLGLANFSLS) form the signal peptide. The Extracellular segment spans residues 25-482 (QTGLDDSTMQ…ETSKKSSNVK (458 aa)). A glycan (N-linked (GlcNAc...) asparagine) is linked at Asn41. A disulfide bridge connects residues Cys54 and Cys61. 10 LRR repeats span residues 64–88 (SNRV…LQSL), 89–111 (SELV…LSGL), 112–134 (SRLQ…LFSG), 136–160 (SSLQ…VKEA), 162–183 (SLQN…FFGS), 186–210 (LPSL…FAGT), 212–232 (IQSL…LGNM), 233–254 (TSLV…DLSG), 255–279 (LVSL…LVSL), and 281–301 (SLTT…LFGK). Asn165 and Asn170 each carry an N-linked (GlcNAc...) asparagine glycan. Asn223 and Asn231 each carry an N-linked (GlcNAc...) asparagine glycan. An N-linked (GlcNAc...) asparagine glycan is attached at Asn286. 2 disulfides stabilise this stretch: Cys315–Cys323 and Cys353–Cys361. LRR repeat units lie at residues 363-386 (GGNI…SLAK), 387-410 (LTSL…ELTT), and 411-438 (LSKL…VTLV). An N-linked (GlcNAc...) asparagine glycan is attached at Asn365. A disordered region spans residues 441–476 (GNANMGKNGPNKTSDAPGASPGSKPSGGSDGSETSK). Residue Asn451 is glycosylated (N-linked (GlcNAc...) asparagine). The segment covering 454–467 (SDAPGASPGSKPSG) has biased composition (low complexity). A helical membrane pass occupies residues 483 to 503 (IIVPVVGGVVGALCLVGLGVC). Topologically, residues 504 to 943 (LYAKKRKRPA…ADSFTSVDGR (440 aa)) are cytoplasmic. The disordered stretch occupies residues 514-534 (RVQSPSSNMVIHPHHSGDNDD). The 282-residue stretch at 585-866 (FSEENILGRG…AHIVNVLSSL (282 aa)) folds into the Protein kinase domain. ATP contacts are provided by residues 591–599 (LGRGGFGTV) and Lys613. Asp714 acts as the Proton acceptor in catalysis. A disordered region spans residues 904 to 943 (QTADDSGSSSSAYGSKDNTQTSIPTRPSGFADSFTSVDGR). Residues 906-918 (ADDSGSSSSAYGS) show a composition bias toward low complexity. Over residues 919–928 (KDNTQTSIPT) the composition is skewed to polar residues.

It belongs to the protein kinase superfamily. Ser/Thr protein kinase family. As to expression, expressed in roots, leaves, stems, siliques and flowers.

Its subcellular location is the membrane. It carries out the reaction L-seryl-[protein] + ATP = O-phospho-L-seryl-[protein] + ADP + H(+). The catalysed reaction is L-threonyl-[protein] + ATP = O-phospho-L-threonyl-[protein] + ADP + H(+). Involved in auxin signal transduction and cell expansion and proliferation regulation. The polypeptide is Receptor-like kinase TMK3 (Arabidopsis thaliana (Mouse-ear cress)).